Here is a 176-residue protein sequence, read N- to C-terminus: Ribosome maturation factor RimM (176 aa).

Residues 97–176 (EDEFYWRDLI…QILVDWDPDF (80 aa)) enclose the PRC barrel domain.

It belongs to the RimM family. In terms of assembly, binds ribosomal protein uS19.

Its subcellular location is the cytoplasm. Functionally, an accessory protein needed during the final step in the assembly of 30S ribosomal subunit, possibly for assembly of the head region. Essential for efficient processing of 16S rRNA. May be needed both before and after RbfA during the maturation of 16S rRNA. It has affinity for free ribosomal 30S subunits but not for 70S ribosomes. The protein is Ribosome maturation factor RimM of Shewanella halifaxensis (strain HAW-EB4).